Reading from the N-terminus, the 482-residue chain is MQISSSSSSNFFSSLYADEPALITLTIVVVVVVLLFKWWLHWKEQRLRLPPGSMGLPYIGETLRLYTENPNSFFATRQNKYGDIFKTHILGCPCVMISSPEAARMVLVSKAHLFKPTYPPSKERMIGPEALFFHQGPYHSTLKRLVQSSFMPSALRPTVSHIELLVLQTLSSWTSQKSINTLEYMKRYAFDVAIMSAFGDKEEPTTIDVIKLLYQRLERGYNSMPLDLPGTLFHKSMKARIELSEELRKVIEKRRENGREEGGLLGVLLGAKDQKRNGLSDSQIADNIIGVIFAATDTTASVLTWLLKYLHDHPNLLQEVSREQFSIRQKIKKENRRISWEDTRKMPLTTRVIQETLRAASVLSFTFREAVQDVEYDGYLIPKGWKVLPLFRRIHHSSEFFPDPEKFDPSRFEVAPKPYTYMPFGNGVHSCPGSELAKLEMLILLHHLTTSFRWEVIGDEEGIQYGPFPVPKKGLPIRVTPI.

A helical transmembrane segment spans residues 20–40 (PALITLTIVVVVVVLLFKWWL). Cys-431 provides a ligand contact to heme.

The protein belongs to the cytochrome P450 family. Heme serves as cofactor. As to expression, mainly expressed in dry seeds. Lower expression in rosette leaves, flowers, siliques and stems. Not expressed in roots. Expressed in both endosperm and vascular tissues of embryo during the seed development and in cortex and endodermis in germinating embryo.

The protein resides in the membrane. The catalysed reaction is 2-cis-(+)-abscisate + reduced [NADPH--hemoprotein reductase] + O2 = (+)-8'-hydroxyabscisate + oxidized [NADPH--hemoprotein reductase] + H2O + H(+). The protein operates within plant hormone degradation; abscisic acid degradation. In terms of biological role, involved in the oxidative degradation of abscisic acid, but not in the isomerization of the produced 8'-hydroxyabscisic acid (8'-OH-ABA) to (-)-phaseic acid (PA). Involved in the control of seed dormancy and germination. This is Abscisic acid 8'-hydroxylase 2 (CYP707A2) from Arabidopsis thaliana (Mouse-ear cress).